We begin with the raw amino-acid sequence, 162 residues long: Large ribosomal subunit protein bL17 (162 aa).

A compositionally biased stretch (basic and acidic residues) spans alanine 125–alanine 140. A disordered region spans residues alanine 125–alanine 162.

It belongs to the bacterial ribosomal protein bL17 family. In terms of assembly, part of the 50S ribosomal subunit. Contacts protein L32.

This chain is Large ribosomal subunit protein bL17, found in Oleidesulfovibrio alaskensis (strain ATCC BAA-1058 / DSM 17464 / G20) (Desulfovibrio alaskensis).